The primary structure comprises 308 residues: Homeobox protein HMX3 (308 aa).

2 disordered regions span residues 1–57 and 107–184; these read MPET…GFAL and AEKS…KKKT. Residues 9-19 are compositionally biased toward pro residues; that stretch reads PSAPPPPPPPK. Composition is skewed to basic and acidic residues over residues 135–144 and 156–177; these read AEQKERDPKS and EEGK…PEKK. Positions 181-240 form a DNA-binding region, homeobox; it reads KKKTRTVFSRSQVFQLESTFDMKRYLSSSERAGLAASLHLTETQVKIWFQNRRNKWKRQL.

It belongs to the HMX homeobox family.

The protein localises to the nucleus. In terms of biological role, transcription factor involved in specification of neuronal cell types and which is required for inner ear and hypothalamus development. Binds to the 5'-CAAGTG-3' core sequence. The polypeptide is Homeobox protein HMX3 (HMX3) (Gallus gallus (Chicken)).